The sequence spans 980 residues: NACHT, LRR and PYD domains-containing protein 7 (980 aa).

Residues 1–93 enclose the Pyrin domain; it reads MTSPQLEWTL…CKMAKAEMME (93 aa). Residues 104–123 are disordered; that stretch reads ELGDAEEDSELAKPGEKEGW. Residues 113 to 123 are compositionally biased toward basic and acidic residues; it reads ELAKPGEKEGW. The NACHT domain maps to 172 to 491; it reads YTVVLHGPAG…LEKEEGEDRD (320 aa). Position 178 to 185 (178 to 185) interacts with ATP; sequence GPAGVGKT. LRR repeat units follow at residues 614-638, 674-697, 760-784, 788-810, 817-840, 845-868, 874-897, 902-928, and 933-957; these read CQDL…DFEL, NSNL…ILCD, KCNL…FFYV, NQSL…MLLY, KHFL…DLAA, SKKL…FLCE, DCKL…YLSE, ACSL…ALEN, and LKHL…VKEK.

The protein belongs to the NLRP family. As to quaternary structure, directly interacts with CASP1 and IL1B. As to expression, expressed in numerous tissues including uterus and ovary, with low levels in heart and brain. Not detected in skeletal muscle.

Functionally, inhibits CASP1/caspase-1-dependent IL1B secretion. The polypeptide is NACHT, LRR and PYD domains-containing protein 7 (NLRP7) (Homo sapiens (Human)).